We begin with the raw amino-acid sequence, 132 residues long: Phosphoribosyl-AMP cyclohydrolase (132 aa).

Asp-82 contributes to the Mg(2+) binding site. Cys-83 provides a ligand contact to Zn(2+). Positions 84 and 86 each coordinate Mg(2+). Zn(2+)-binding residues include Cys-99 and Cys-106.

It belongs to the PRA-CH family. Homodimer. Mg(2+) is required as a cofactor. It depends on Zn(2+) as a cofactor.

It localises to the cytoplasm. It catalyses the reaction 1-(5-phospho-beta-D-ribosyl)-5'-AMP + H2O = 1-(5-phospho-beta-D-ribosyl)-5-[(5-phospho-beta-D-ribosylamino)methylideneamino]imidazole-4-carboxamide. Its pathway is amino-acid biosynthesis; L-histidine biosynthesis; L-histidine from 5-phospho-alpha-D-ribose 1-diphosphate: step 3/9. Catalyzes the hydrolysis of the adenine ring of phosphoribosyl-AMP. This chain is Phosphoribosyl-AMP cyclohydrolase, found in Paramagnetospirillum magneticum (strain ATCC 700264 / AMB-1) (Magnetospirillum magneticum).